The sequence spans 912 residues: Metabotropic glutamate receptor 4 (912 aa).

An N-terminal signal peptide occupies residues 1–32 (MPGKSGLGWWWARLPLCLLLSLYGPWMPSSLG). At 33–586 (KPKGHPHMNS…PIIKLEWDSP (554 aa)) the chain is on the extracellular side. C67 and C109 form a disulfide bridge. Residue N98 is glycosylated (N-linked (GlcNAc...) asparagine). L-glutamate contacts are provided by residues S159, 180–182 (AST), and Y230. 7 cysteine pairs are disulfide-bonded: C249/C538, C372/C388, C428/C435, C520/C539, C524/C542, C545/C557, and C560/C573. An N-linked (GlcNAc...) asparagine glycan is attached at N301. Residue D312 coordinates L-glutamate. K405 contacts L-glutamate. Residues N454 and N484 are each glycosylated (N-linked (GlcNAc...) asparagine). A glycan (N-linked (GlcNAc...) asparagine) is linked at N569. A helical transmembrane segment spans residues 587 to 607 (WAVLPLFLAVVGIAATLFVVI). The Cytoplasmic segment spans residues 608-624 (TFVRYNDTPIVKASGRE). The helical transmembrane segment at 625 to 645 (LSYVLLAGIFLCYATTFLMIA) threads the bilayer. The Extracellular segment spans residues 646–653 (EPDLGTCS). The chain crosses the membrane as a helical span at residues 654–671 (LRRIFLGLGMSISYAALL). Topologically, residues 672–699 (TKTNRIYRIFEQGKRSVSAPRFISPASQ) are cytoplasmic. The helical transmembrane segment at 700-720 (LAITFSLISLQLLGICVWFVV) threads the bilayer. At 721 to 751 (DPSHSVVDFQDQRTLDPRFARGVLKCDISDL) the chain is on the extracellular side. Residues 752–772 (SLICLLGYSMLLMVTCTVYAI) form a helical membrane-spanning segment. Topologically, residues 773 to 786 (KTRGVPETFNEAKP) are cytoplasmic. A helical membrane pass occupies residues 787-807 (IGFTMYTTCIVWLAFIPIFFG). The Extracellular portion of the chain corresponds to 808–826 (TSQSADKLYIQTTTLTVSV). The chain crosses the membrane as a helical span at residues 827 to 847 (SLSASVSLGMLYMPKVYIILF). Residues 848–912 (HPEQNVPKRK…TYVTYTNHAI (65 aa)) lie on the Cytoplasmic side of the membrane.

The protein belongs to the G-protein coupled receptor 3 family. In terms of assembly, interacts with PICK1.

It is found in the cell membrane. Its function is as follows. G-protein coupled receptor for glutamate. Ligand binding causes a conformation change that triggers signaling via guanine nucleotide-binding proteins (G proteins) and modulates the activity of down-stream effectors. Signaling inhibits adenylate cyclase activity. The chain is Metabotropic glutamate receptor 4 (GRM4) from Macaca fascicularis (Crab-eating macaque).